The primary structure comprises 555 residues: Formate--tetrahydrofolate ligase (555 aa).

Residue 64 to 71 (TKAGIGKT) coordinates ATP.

This sequence belongs to the formate--tetrahydrofolate ligase family.

It carries out the reaction (6S)-5,6,7,8-tetrahydrofolate + formate + ATP = (6R)-10-formyltetrahydrofolate + ADP + phosphate. It functions in the pathway one-carbon metabolism; tetrahydrofolate interconversion. The sequence is that of Formate--tetrahydrofolate ligase from Parabacteroides distasonis (strain ATCC 8503 / DSM 20701 / CIP 104284 / JCM 5825 / NCTC 11152).